We begin with the raw amino-acid sequence, 95 residues long: Co-chaperonin GroES (95 aa).

The protein belongs to the GroES chaperonin family. Heptamer of 7 subunits arranged in a ring. Interacts with the chaperonin GroEL.

Its subcellular location is the cytoplasm. Its function is as follows. Together with the chaperonin GroEL, plays an essential role in assisting protein folding. The GroEL-GroES system forms a nano-cage that allows encapsulation of the non-native substrate proteins and provides a physical environment optimized to promote and accelerate protein folding. GroES binds to the apical surface of the GroEL ring, thereby capping the opening of the GroEL channel. In Rickettsia prowazekii (strain Madrid E), this protein is Co-chaperonin GroES.